The following is a 675-amino-acid chain: Polyamine deacetylase HDAC10 (675 aa).

D22 is a substrate binding site. Residues 23–26 carry the Substrate specificity motif; it reads PACE. A substrate-binding site is contributed by D94. H137 (proton donor/acceptor) is an active-site residue. Zn(2+) is bound by residues D174, H176, and D267. Residue Y307 participates in substrate binding. Positions 362-399 are disordered; sequence LAQSETNPKRPRLDATNGGPKESSEPASESNPKKTAQD.

It belongs to the histone deacetylase family. HD type 2 subfamily.

The protein resides in the cytoplasm. Its subcellular location is the nucleus. The enzyme catalyses N(8)-acetylspermidine + H2O = spermidine + acetate. The catalysed reaction is N-acetylputrescine + H2O = putrescine + acetate. It carries out the reaction N-acetylcadaverine + H2O = cadaverine + acetate. In terms of biological role, polyamine deacetylase (PDAC), which acts preferentially on N(8)-acetylspermidine, and also on acetylcadaverine and acetylputrescine. Exhibits attenuated catalytic activity toward N(1),N(8)-diacetylspermidine and very low activity, if any, toward N(1)-acetylspermidine. Has a very weak lysine deacetylase, if any. The protein is Polyamine deacetylase HDAC10 (hdac10) of Danio rerio (Zebrafish).